Reading from the N-terminus, the 565-residue chain is Adenine deaminase (565 aa).

It belongs to the metallo-dependent hydrolases superfamily. Adenine deaminase family. It depends on Mn(2+) as a cofactor.

It carries out the reaction adenine + H2O + H(+) = hypoxanthine + NH4(+). The polypeptide is Adenine deaminase (Cereibacter sphaeroides (strain ATCC 17023 / DSM 158 / JCM 6121 / CCUG 31486 / LMG 2827 / NBRC 12203 / NCIMB 8253 / ATH 2.4.1.) (Rhodobacter sphaeroides)).